Consider the following 328-residue polypeptide: Cytochrome f (328 aa).

Positions 1 to 44 are cleaved as a signal peptide; sequence MRNPDTLGLWTKTMVALRRFTVLAIATVSVFLITDLGLPQAASA. Heme-binding residues include tyrosine 45, cysteine 66, cysteine 69, and histidine 70. Residues 296–313 traverse the membrane as a helical segment; sequence FLVLFLAGIMLSQILLVL.

It belongs to the cytochrome f family. As to quaternary structure, the 4 large subunits of the cytochrome b6-f complex are cytochrome b6, subunit IV (17 kDa polypeptide, PetD), cytochrome f and the Rieske protein, while the 4 small subunits are PetG, PetL, PetM and PetN. The complex functions as a dimer. Requires heme as cofactor.

The protein resides in the cellular thylakoid membrane. Its function is as follows. Component of the cytochrome b6-f complex, which mediates electron transfer between photosystem II (PSII) and photosystem I (PSI), cyclic electron flow around PSI, and state transitions. This chain is Cytochrome f (petA), found in Synechocystis sp. (strain ATCC 27184 / PCC 6803 / Kazusa).